Consider the following 86-residue polypeptide: Putative membrane protein insertion efficiency factor (86 aa).

It belongs to the UPF0161 family.

Its subcellular location is the cell inner membrane. Its function is as follows. Could be involved in insertion of integral membrane proteins into the membrane. The polypeptide is Putative membrane protein insertion efficiency factor (Pseudomonas aeruginosa (strain UCBPP-PA14)).